We begin with the raw amino-acid sequence, 244 residues long: tRNA (guanine-N(1)-)-methyltransferase (244 aa).

S-adenosyl-L-methionine contacts are provided by residues Gly-112 and 131-136; that span reads LGDFIL. Residues 211 to 244 form a disordered region; sequence IKRTSDRRPDLLEKWQQEKKPGSREQGSREQGEK.

This sequence belongs to the RNA methyltransferase TrmD family. As to quaternary structure, homodimer.

The protein localises to the cytoplasm. It catalyses the reaction guanosine(37) in tRNA + S-adenosyl-L-methionine = N(1)-methylguanosine(37) in tRNA + S-adenosyl-L-homocysteine + H(+). Specifically methylates guanosine-37 in various tRNAs. In Trichormus variabilis (strain ATCC 29413 / PCC 7937) (Anabaena variabilis), this protein is tRNA (guanine-N(1)-)-methyltransferase.